The sequence spans 197 residues: Probable UbiX-like flavin prenyltransferase (197 aa).

FMN-binding positions include 9-11 (GAT), Ser-36, 87-90 (SMKT), and Arg-122.

The protein belongs to the UbiX/PAD1 family. YclB subfamily. As to quaternary structure, homododecamer.

It catalyses the reaction dimethylallyl phosphate + FMNH2 = prenylated FMNH2 + phosphate. Its function is as follows. Flavin prenyltransferase that catalyzes the synthesis of the prenylated FMN cofactor (prenyl-FMN) for phenolic acid decarboxylase C. Involved in the decarboxylation and detoxification of phenolic derivatives under both aerobic and anaerobic conditions. The chain is Probable UbiX-like flavin prenyltransferase (ecdB) from Escherichia coli O111:H-.